Reading from the N-terminus, the 213-residue chain is 2,3-bisphosphoglycerate-dependent phosphoglycerate mutase (213 aa).

Substrate-binding positions include 8-15, 21-22, R58, 84-87, K95, 111-112, and 155-156; these read RHGQSEWN, TG, ERNY, RR, and GN. The Tele-phosphohistidine intermediate role is filled by H9. The active-site Proton donor/acceptor is E84.

It belongs to the phosphoglycerate mutase family. BPG-dependent PGAM subfamily.

It carries out the reaction (2R)-2-phosphoglycerate = (2R)-3-phosphoglycerate. It functions in the pathway carbohydrate degradation; glycolysis; pyruvate from D-glyceraldehyde 3-phosphate: step 3/5. Functionally, catalyzes the interconversion of 2-phosphoglycerate and 3-phosphoglycerate. The sequence is that of 2,3-bisphosphoglycerate-dependent phosphoglycerate mutase from Cytophaga hutchinsonii (strain ATCC 33406 / DSM 1761 / CIP 103989 / NBRC 15051 / NCIMB 9469 / D465).